The primary structure comprises 126 residues: Phosphoribosyl-AMP cyclohydrolase (126 aa).

A Mg(2+)-binding site is contributed by Asp-76. Cys-77 is a binding site for Zn(2+). Positions 78 and 80 each coordinate Mg(2+). Zn(2+)-binding residues include Cys-94 and Cys-101.

Belongs to the PRA-CH family. Homodimer. Mg(2+) serves as cofactor. The cofactor is Zn(2+).

The protein resides in the cytoplasm. The enzyme catalyses 1-(5-phospho-beta-D-ribosyl)-5'-AMP + H2O = 1-(5-phospho-beta-D-ribosyl)-5-[(5-phospho-beta-D-ribosylamino)methylideneamino]imidazole-4-carboxamide. The protein operates within amino-acid biosynthesis; L-histidine biosynthesis; L-histidine from 5-phospho-alpha-D-ribose 1-diphosphate: step 3/9. Functionally, catalyzes the hydrolysis of the adenine ring of phosphoribosyl-AMP. In Vesicomyosocius okutanii subsp. Calyptogena okutanii (strain HA), this protein is Phosphoribosyl-AMP cyclohydrolase.